Here is a 245-residue protein sequence, read N- to C-terminus: Homeobox protein goosecoid (245 aa).

Positions 150-209 (KRRHRTIFTDEQLEALENLFQETKYPDVGTREQLARKVHLREEKVEVWFKNRRAKWRRQK) form a DNA-binding region, homeobox. A disordered region spans residues 203-245 (AKWRRQKRSSSEESENAQKWNKASKTSPEKRQEDGKSDLDSDS). The span at 219–228 (AQKWNKASKT) shows a compositional bias: polar residues. Residues 229-245 (SPEKRQEDGKSDLDSDS) are compositionally biased toward basic and acidic residues.

Belongs to the paired homeobox family. Bicoid subfamily.

It is found in the nucleus. Functionally, involved in the development of the organizer region in the gastrula (Hensen node in chicken). The protein is Homeobox protein goosecoid (GSC) of Gallus gallus (Chicken).